A 256-amino-acid polypeptide reads, in one-letter code: Alcohol dehydrogenase (256 aa).

Position 12-35 (12-35) interacts with NAD(+); the sequence is FVAGLGGIGLDTSKELLKRDLKNL. S140 is a binding site for substrate. Residue Y153 is the Proton acceptor of the active site.

Belongs to the short-chain dehydrogenases/reductases (SDR) family. In terms of assembly, homodimer.

The enzyme catalyses a primary alcohol + NAD(+) = an aldehyde + NADH + H(+). It carries out the reaction a secondary alcohol + NAD(+) = a ketone + NADH + H(+). This chain is Alcohol dehydrogenase (Adh), found in Drosophila sechellia (Fruit fly).